Reading from the N-terminus, the 234-residue chain is Two-component response regulator ARR9 (234 aa).

Residues 10-147 (HVLAVDDSLF…DLNKLKPHMM (138 aa)) enclose the Response regulatory domain. Residue Asp-80 is modified to 4-aspartylphosphate.

It belongs to the ARR family. Type-A subfamily. Interacts with AHP1 and AHP3. In terms of processing, two-component system major event consists of a His-to-Asp phosphorelay between a sensor histidine kinase (HK) and a response regulator (RR). In plants, the His-to-Asp phosphorelay involves an additional intermediate named Histidine-containing phosphotransfer protein (HPt). This multistep phosphorelay consists of a His-Asp-His-Asp sequential transfer of a phosphate group between first a His and an Asp of the HK protein, followed by the transfer to a conserved His of the HPt protein and finally the transfer to an Asp in the receiver domain of the RR protein. Predominantly expressed in roots.

The protein localises to the nucleus. In terms of biological role, functions as a response regulator involved in His-to-Asp phosphorelay signal transduction system. Phosphorylation of the Asp residue in the receiver domain activates the ability of the protein to promote the transcription of target genes. Type-A response regulators seem to act as negative regulators of the cytokinin signaling. This chain is Two-component response regulator ARR9 (ARR9), found in Arabidopsis thaliana (Mouse-ear cress).